The primary structure comprises 165 residues: MRHIAAADTGDDEGEGLLVRRIKNGTVIDHIDGGEALNVIRILGISGTTNEALSIATNVPSKHMGSTKDIVKISNRELSKEEVDRIALISPNATINIIRHFKVCEKQGVEIPTVIEGSVRCPNPGCITRTNEPIRTRFAVLPDGKGLRCLYCDSVITKDLTSYII.

The Zn(2+) site is built by Cys121, Cys126, Cys149, and Cys152.

Belongs to the PyrI family. Contains catalytic and regulatory chains. Zn(2+) is required as a cofactor.

Involved in allosteric regulation of aspartate carbamoyltransferase. The polypeptide is Aspartate carbamoyltransferase regulatory chain (Methanoregula boonei (strain DSM 21154 / JCM 14090 / 6A8)).